Reading from the N-terminus, the 277-residue chain is Undecaprenyl-diphosphatase (277 aa).

Transmembrane regions (helical) follow at residues 44-64 (RAMAFNIIIQLAAILAVVWEF), 86-106 (GNLLLAFMPAVVLGVLFADLI), 110-130 (LFNPVTVAAALVVGGVIMLWA), 184-204 (AATEFSFFLAMPTMVGAAVYS), 215-235 (GDLPVFALGFVTSFIFAMIAV), and 250-270 (FAWYRIVFGLFILATWQFGWV).

Belongs to the UppP family.

It is found in the cell inner membrane. It catalyses the reaction di-trans,octa-cis-undecaprenyl diphosphate + H2O = di-trans,octa-cis-undecaprenyl phosphate + phosphate + H(+). Functionally, catalyzes the dephosphorylation of undecaprenyl diphosphate (UPP). Confers resistance to bacitracin. This chain is Undecaprenyl-diphosphatase, found in Pseudomonas putida (strain ATCC 47054 / DSM 6125 / CFBP 8728 / NCIMB 11950 / KT2440).